We begin with the raw amino-acid sequence, 303 residues long: GPN-loop GTPase 2 (303 aa).

Residue 29–34 (GSGKST) participates in GTP binding. The Gly-Pro-Asn (GPN)-loop; involved in dimer interface motif lies at 85–87 (GPN). 187-190 (SKMD) serves as a coordination point for GTP.

This sequence belongs to the GPN-loop GTPase family. As to quaternary structure, heterodimers with gpn1 or gpn3. Binds to RNA polymerase II (RNAPII).

Functionally, small GTPase required for proper localization of RNA polymerase II and III (RNAPII and RNAPIII). May act at an RNAP assembly step prior to nuclear import. The protein is GPN-loop GTPase 2 of Xenopus tropicalis (Western clawed frog).